Here is a 446-residue protein sequence, read N- to C-terminus: UDP-N-acetylmuramate--L-alanine ligase (446 aa).

122–128 contributes to the ATP binding site; that stretch reads GTHGKTT.

This sequence belongs to the MurCDEF family.

The protein localises to the cytoplasm. The enzyme catalyses UDP-N-acetyl-alpha-D-muramate + L-alanine + ATP = UDP-N-acetyl-alpha-D-muramoyl-L-alanine + ADP + phosphate + H(+). Its pathway is cell wall biogenesis; peptidoglycan biosynthesis. In terms of biological role, cell wall formation. In Nocardioides sp. (strain ATCC BAA-499 / JS614), this protein is UDP-N-acetylmuramate--L-alanine ligase.